Here is a 107-residue protein sequence, read N- to C-terminus: Ferredoxin (107 aa).

4Fe-4S ferredoxin-type domains lie at 8–37 (ERVV…LDEN) and 38–67 (GKSR…KASE). Cys17, Cys20, and Cys23 together coordinate [4Fe-4S] cluster. [3Fe-4S] cluster contacts are provided by Cys27, Cys47, and Cys53. Residue Cys57 coordinates [4Fe-4S] cluster.

As to quaternary structure, monomer. The cofactor is [4Fe-4S] cluster. [3Fe-4S] cluster serves as cofactor. In terms of processing, the N-terminus is blocked.

Ferredoxins are iron-sulfur proteins that transfer electrons in a wide variety of metabolic reactions. In Pyrobaculum islandicum (strain DSM 4184 / JCM 9189 / GEO3), this protein is Ferredoxin.